Consider the following 30-residue polypeptide: Root cyclotide 1 (30 aa).

Residues 1-30 (GIPCAESCVWIPCTVTALLGCSCSNKVCYN) constitute a cross-link (cyclopeptide (Gly-Asn)). Intrachain disulfides connect Cys-4–Cys-21, Cys-8–Cys-23, and Cys-13–Cys-28.

Post-translationally, this is a cyclic peptide. In terms of tissue distribution, expressed in roots.

Its function is as follows. Probably participates in a plant defense mechanism. The sequence is that of Root cyclotide 1 from Viola hederacea (Australian violet).